A 111-amino-acid chain; its full sequence is Large ribosomal subunit protein uL24 (111 aa).

It belongs to the universal ribosomal protein uL24 family. In terms of assembly, part of the 50S ribosomal subunit.

Functionally, one of two assembly initiator proteins, it binds directly to the 5'-end of the 23S rRNA, where it nucleates assembly of the 50S subunit. Its function is as follows. One of the proteins that surrounds the polypeptide exit tunnel on the outside of the subunit. This is Large ribosomal subunit protein uL24 from Chlamydia trachomatis serovar A (strain ATCC VR-571B / DSM 19440 / HAR-13).